A 662-amino-acid polypeptide reads, in one-letter code: DNA helicase/primase complex-associated protein (662 aa).

Belongs to the herpesviridae HEPA family. As to quaternary structure, associates with the primase and the helicase to form the helicase-primase complex. Interacts with the origin-binding protein. Interacts with the polymerase catalytic subunit.

The protein localises to the host nucleus. In terms of biological role, component of the helicase/primase complex. Unwinds the DNA at the replication forks and generates single-stranded DNA for both leading and lagging strand synthesis. The primase synthesizes short RNA primers on the lagging strand that the polymerase presumably elongates using dNTPs. The primase-associated factor has no known catalytic activity in the complex and may serve to facilitate the formation of the replisome by directly interacting with the origin-binding protein and the polymerase. The protein is DNA helicase/primase complex-associated protein (U74) of Human herpesvirus 6B (strain Z29) (HHV-6 variant B).